Consider the following 373-residue polypeptide: Ca(2+)/H(+) antiporter (373 aa).

11 consecutive transmembrane segments (helical) span residues 6–26, 29–49, 61–81, 94–114, 134–154, 162–182, 220–240, 249–269, 291–311, 318–338, and 349–369; these read TIFFGLLLFIPISLLGHWLHW, VSIFLTASLAIIPLAAFMGEA, LGGLLNATFGNATELILAFIA, ITGSIISNLLLVMGFAMLLGG, MNLAVIAILLPTAVEHTSNGI, LSVAVAIVLIIVYGLTLLFSM, FWLGILLVVTITVAIESELLV, SLGLTALFTGVILLPVIGNAA, VGSTLQIALFVAPVLVIAGWI, LDFNPFELVAVAVSVLIANSI, and GSLLLATYIVIGLAFFFHPVV.

The protein belongs to the Ca(2+):cation antiporter (CaCA) (TC 2.A.19) family. Cation/proton exchanger (CAX) subfamily.

Its subcellular location is the cell inner membrane. In terms of biological role, ca(+)/H(+) antiporter that extrudes calcium in exchange for external protons. Plays an important role in salt tolerance. Does not transport sodium or lithium. The chain is Ca(2+)/H(+) antiporter from Aphanothece halophytica.